Here is a 161-residue protein sequence, read N- to C-terminus: 2-C-methyl-D-erythritol 2,4-cyclodiphosphate synthase (161 aa).

The a divalent metal cation site is built by Asp10 and His12. Residues 10-12 (DVH) and 36-37 (HS) each bind 4-CDP-2-C-methyl-D-erythritol 2-phosphate. Residue His44 coordinates a divalent metal cation. 4-CDP-2-C-methyl-D-erythritol 2-phosphate is bound by residues 58 to 60 (DIG), 63 to 67 (FPDTD), 102 to 108 (AQAPKMA), 134 to 137 (TTTE), Phe141, and Arg144.

This sequence belongs to the IspF family. As to quaternary structure, homotrimer. Requires a divalent metal cation as cofactor.

The enzyme catalyses 4-CDP-2-C-methyl-D-erythritol 2-phosphate = 2-C-methyl-D-erythritol 2,4-cyclic diphosphate + CMP. Its pathway is isoprenoid biosynthesis; isopentenyl diphosphate biosynthesis via DXP pathway; isopentenyl diphosphate from 1-deoxy-D-xylulose 5-phosphate: step 4/6. In terms of biological role, involved in the biosynthesis of isopentenyl diphosphate (IPP) and dimethylallyl diphosphate (DMAPP), two major building blocks of isoprenoid compounds. Catalyzes the conversion of 4-diphosphocytidyl-2-C-methyl-D-erythritol 2-phosphate (CDP-ME2P) to 2-C-methyl-D-erythritol 2,4-cyclodiphosphate (ME-CPP) with a corresponding release of cytidine 5-monophosphate (CMP). The protein is 2-C-methyl-D-erythritol 2,4-cyclodiphosphate synthase of Shewanella sediminis (strain HAW-EB3).